The primary structure comprises 66 residues: DNA gyrase inhibitor YacG (66 aa).

C9, C12, C28, and C32 together coordinate Zn(2+). The segment at 45 to 66 (HKIAGSEESEDELYSGDLEPRH) is disordered.

Belongs to the DNA gyrase inhibitor YacG family. In terms of assembly, interacts with GyrB. Requires Zn(2+) as cofactor.

Its function is as follows. Inhibits all the catalytic activities of DNA gyrase by preventing its interaction with DNA. Acts by binding directly to the C-terminal domain of GyrB, which probably disrupts DNA binding by the gyrase. In Pseudomonas putida (strain ATCC 47054 / DSM 6125 / CFBP 8728 / NCIMB 11950 / KT2440), this protein is DNA gyrase inhibitor YacG.